The primary structure comprises 66 residues: MKVTFQVPSITCNHCVDKIEKFVGEIEGVSFIDASVEKKSVVVEFDTPATQDLIKEALLDAGQEVV.

Positions 1–66 (MKVTFQVPSI…ALLDAGQEVV (66 aa)) constitute an HMA domain. Residues C12 and C15 each coordinate Cu cation.

Functionally, part of a cation-transporting system which is associated with copper export out of the H.pylori cells. This chain is COP-associated protein (copP), found in Helicobacter pylori (strain J99 / ATCC 700824) (Campylobacter pylori J99).